The primary structure comprises 163 residues: Methyl-CpG-binding domain-containing protein 3 (163 aa).

The segment at 6-56 (TTLIDSYAAQCWKCLKVRSIESQEDYEEIRSKTLEKFFECKRCEEPGDMVM) adopts a CW-type zinc-finger fold. One can recognise an MBD domain in the interval 65–137 (WFQDEHSIPK…EEVSFAAPKR (73 aa)). Positions 140 to 163 (LKKKPVDSHSSSRNTEEDGVSRDA) are disordered. Residues 153-163 (NTEEDGVSRDA) show a composition bias toward basic and acidic residues.

Its subcellular location is the nucleus. Functionally, probable transcriptional regulator. This chain is Methyl-CpG-binding domain-containing protein 3 (MBD3), found in Arabidopsis thaliana (Mouse-ear cress).